The following is a 118-amino-acid chain: uncharacterized protein (118 aa).

Positions 1–26 (MTKLKMLSMLTVMIASLFIFSSQALA) are cleaved as a signal peptide. The region spanning 30–104 (FTVSTSSGAP…VNIGYVSDTY (75 aa)) is the SH3b domain.

The protein to B.subtilis YraI.

This is an uncharacterized protein from Bacillus subtilis (strain 168).